We begin with the raw amino-acid sequence, 139 residues long: Histone H2AX (139 aa).

A disordered region spans residues 1-24; the sequence is MSSTATTKGGRGKPKASKSVSRSS. The residue at position 136 (serine 136) is a Phosphoserine; by ATM and ATR. The short motif at 136-137 is the [ST]-Q motif element; the sequence is SQ.

It belongs to the histone H2A family. In terms of assembly, the nucleosome is a histone octamer containing two molecules each of H2A, H2B, H3 and H4 assembled in one H3-H4 heterotetramer and two H2A-H2B heterodimers. The octamer wraps approximately 147 bp of DNA. Interacts with numerous proteins required for DNA damage signaling and repair when phosphorylated on Ser-136. Post-translationally, phosphorylated on Ser-136 (to form gamma-H2AX) in response to DNA double strand breaks (DSBs) generated by exogenous genotoxic agents and by stalled replication forks, and may also occur during meiotic recombination events. Phosphorylation can extend up to several thousand nucleosomes from the actual site of the DSB and may mark the surrounding chromatin for recruitment of proteins required for DNA damage signaling and repair. Widespread phosphorylation may also serve to amplify the damage signal or aid repair of persistent lesions. Phosphorylation of Ser-136 in response to ionizing radiation is mediated by ATM while defects in DNA replication induce Ser-136 phosphorylation subsequent to activation of ATR. Dephosphorylation of Ser-136 by PP2A is required for DNA DSB repair.

It localises to the nucleus. The protein resides in the chromosome. In terms of biological role, variant histone H2A which replaces conventional H2A in a subset of nucleosomes. Nucleosomes wrap and compact DNA into chromatin, limiting DNA accessibility to the cellular machineries which require DNA as a template. Histones thereby play a central role in transcription regulation, DNA repair, DNA replication and chromosomal stability. DNA accessibility is regulated via a complex set of post-translational modifications of histones, also called histone code, and nucleosome remodeling. Required for checkpoint-mediated arrest of cell cycle progression in response to low doses of ionizing radiation and for efficient repair of DNA double strand breaks (DSBs) specifically when modified by C-terminal phosphorylation. This is Histone H2AX (HIS2A) from Cicer arietinum (Chickpea).